Reading from the N-terminus, the 205-residue chain is Molybdenum cofactor guanylyltransferase (205 aa).

GTP is bound by residues L14–G16, K27, D77, and D107. D107 provides a ligand contact to Mg(2+).

The protein belongs to the MobA family. Monomer. Mg(2+) is required as a cofactor.

Its subcellular location is the cytoplasm. The catalysed reaction is Mo-molybdopterin + GTP + H(+) = Mo-molybdopterin guanine dinucleotide + diphosphate. Its function is as follows. Transfers a GMP moiety from GTP to Mo-molybdopterin (Mo-MPT) cofactor (Moco or molybdenum cofactor) to form Mo-molybdopterin guanine dinucleotide (Mo-MGD) cofactor. The sequence is that of Molybdenum cofactor guanylyltransferase from Burkholderia vietnamiensis (strain G4 / LMG 22486) (Burkholderia cepacia (strain R1808)).